Consider the following 752-residue polypeptide: Mitochondrial Rho GTPase 1 (752 aa).

Residues 1–671 (MRKDVRIVLA…RNALSYGTNR (671 aa)) are Cytoplasmic-facing. The Miro 1 domain maps to 2–170 (RKDVRIVLAG…FYFAQKAVLY (169 aa)). Residues 11–18 (GDPDVGKS), 57–61 (DTSSS), and 115–118 (NKID) contribute to the GTP site. EF-hand domains follow at residues 186 to 221 (ACVD…CFDT) and 333 to 368 (NGYQ…APDN). 8 residues coordinate Ca(2+): Asp199, Asp201, Asp203, Glu210, Asp346, Asp348, Asp350, and Glu357. The segment at 426–460 (SSGSASTPAPIPLTPTGPPGSRPSRNRTPCPPSTI) is disordered. Positions 434-446 (APIPLTPTGPPGS) are enriched in pro residues. Residues 481–651 (RSVFLGFVLG…YGLICTIAVD (171 aa)) form the Miro 2 domain. GTP is bound by residues 490–497 (GAAGSGKT), 526–530 (EQAGA), and 595–598 (TKAD). Residues 672 to 692 (WQFWGYIGLVVIGGGGAVWIC) traverse the membrane as a helical; Anchor for type IV membrane protein segment. Topologically, residues 693-752 (AKVLKVPIGSTLGFGSSASTTSWWLSGAQARGAGGPNATKVSSWFDWIRWQSSSNVRSEL) are mitochondrial intermembrane.

This sequence belongs to the mitochondrial Rho GTPase family.

The protein resides in the mitochondrion outer membrane. Mitochondrial GTPase involved in mitochondrial trafficking. Probably involved in control of anterograde transport of mitochondria and their subcellular distribution. The polypeptide is Mitochondrial Rho GTPase 1 (GEM1) (Mycosarcoma maydis (Corn smut fungus)).